Reading from the N-terminus, the 248-residue chain is ATP synthase subunit a, chloroplastic (248 aa).

Helical transmembrane passes span 39–59, 96–116, 135–155, 200–220, and 221–241; these read QVLITSWVVIAILLGSSILAV, VPFIGTLFLFIFVSNWSGALF, INTTVALALLTSVAYFYAGLT, LVVVVLLSLVPLVVPIPVMFL, and GLFTSGIQALIFATLAAAYIG.

The protein belongs to the ATPase A chain family. In terms of assembly, F-type ATPases have 2 components, CF(1) - the catalytic core - and CF(0) - the membrane proton channel. CF(1) has five subunits: alpha(3), beta(3), gamma(1), delta(1), epsilon(1). CF(0) has four main subunits: a, b, b' and c.

The protein resides in the plastid. The protein localises to the chloroplast thylakoid membrane. Its function is as follows. Key component of the proton channel; it plays a direct role in the translocation of protons across the membrane. This chain is ATP synthase subunit a, chloroplastic, found in Pelargonium hortorum (Common geranium).